The following is a 179-amino-acid chain: Adenine phosphoribosyltransferase (179 aa).

The protein belongs to the purine/pyrimidine phosphoribosyltransferase family. As to quaternary structure, homodimer.

Its subcellular location is the cytoplasm. It catalyses the reaction AMP + diphosphate = 5-phospho-alpha-D-ribose 1-diphosphate + adenine. Its pathway is purine metabolism; AMP biosynthesis via salvage pathway; AMP from adenine: step 1/1. Functionally, catalyzes a salvage reaction resulting in the formation of AMP, that is energically less costly than de novo synthesis. The polypeptide is Adenine phosphoribosyltransferase (Helicobacter pylori (strain HPAG1)).